The chain runs to 361 residues: D-alanine--D-alanine ligase (361 aa).

The 211-residue stretch at 134-344 folds into the ATP-grasp domain; it reads KILAQRAGVP…YTDLITKLID (211 aa). 169–224 contacts ATP; the sequence is ASQLGSDLFVKPSNQGSSVGVSHVTNEKEYKVALAEAFKYDDKVLVEETVHGTEVE. Mg(2+) is bound by residues aspartate 297, glutamate 311, and asparagine 313.

This sequence belongs to the D-alanine--D-alanine ligase family. Mg(2+) serves as cofactor. It depends on Mn(2+) as a cofactor.

It is found in the cytoplasm. It catalyses the reaction 2 D-alanine + ATP = D-alanyl-D-alanine + ADP + phosphate + H(+). It functions in the pathway cell wall biogenesis; peptidoglycan biosynthesis. Its function is as follows. Cell wall formation. The polypeptide is D-alanine--D-alanine ligase (Lactobacillus gasseri (strain ATCC 33323 / DSM 20243 / BCRC 14619 / CIP 102991 / JCM 1131 / KCTC 3163 / NCIMB 11718 / NCTC 13722 / AM63)).